Consider the following 435-residue polypeptide: Histidinol dehydrogenase (435 aa).

Positions 131, 189, and 212 each coordinate NAD(+). Substrate contacts are provided by S238, Q260, and H263. Zn(2+) contacts are provided by Q260 and H263. Active-site proton acceptor residues include E327 and H328. Substrate-binding residues include H328, D361, E415, and H420. D361 provides a ligand contact to Zn(2+). Zn(2+) is bound at residue H420.

The protein belongs to the histidinol dehydrogenase family. In terms of assembly, homodimer. The cofactor is Zn(2+).

The enzyme catalyses L-histidinol + 2 NAD(+) + H2O = L-histidine + 2 NADH + 3 H(+). The protein operates within amino-acid biosynthesis; L-histidine biosynthesis; L-histidine from 5-phospho-alpha-D-ribose 1-diphosphate: step 9/9. Functionally, catalyzes the sequential NAD-dependent oxidations of L-histidinol to L-histidinaldehyde and then to L-histidine. This is Histidinol dehydrogenase from Buchnera aphidicola subsp. Baizongia pistaciae (strain Bp).